A 386-amino-acid chain; its full sequence is Bifunctional enzyme IspD/IspF (386 aa).

The 2-C-methyl-D-erythritol 4-phosphate cytidylyltransferase stretch occupies residues 1–229 (MIRGERVIGI…RARALLEAPV (229 aa)). A 2-C-methyl-D-erythritol 2,4-cyclodiphosphate synthase region spans residues 230–386 (ATGVGYDTHR…AIALLVRAAG (157 aa)). D236 and H238 together coordinate a divalent metal cation. 4-CDP-2-C-methyl-D-erythritol 2-phosphate contacts are provided by residues 236–238 (DTH) and 261–262 (HS). Residue H269 participates in a divalent metal cation binding. 4-CDP-2-C-methyl-D-erythritol 2-phosphate-binding positions include 283–285 (DLG), 288–292 (FPDTD), 359–362 (TTGE), F366, and R369.

The protein in the N-terminal section; belongs to the IspD/TarI cytidylyltransferase family. IspD subfamily. In the C-terminal section; belongs to the IspF family. A divalent metal cation is required as a cofactor.

The enzyme catalyses 2-C-methyl-D-erythritol 4-phosphate + CTP + H(+) = 4-CDP-2-C-methyl-D-erythritol + diphosphate. The catalysed reaction is 4-CDP-2-C-methyl-D-erythritol 2-phosphate = 2-C-methyl-D-erythritol 2,4-cyclic diphosphate + CMP. The protein operates within isoprenoid biosynthesis; isopentenyl diphosphate biosynthesis via DXP pathway; isopentenyl diphosphate from 1-deoxy-D-xylulose 5-phosphate: step 2/6. It functions in the pathway isoprenoid biosynthesis; isopentenyl diphosphate biosynthesis via DXP pathway; isopentenyl diphosphate from 1-deoxy-D-xylulose 5-phosphate: step 4/6. Its function is as follows. Bifunctional enzyme that catalyzes the formation of 4-diphosphocytidyl-2-C-methyl-D-erythritol from CTP and 2-C-methyl-D-erythritol 4-phosphate (MEP) (IspD), and catalyzes the conversion of 4-diphosphocytidyl-2-C-methyl-D-erythritol 2-phosphate (CDP-ME2P) to 2-C-methyl-D-erythritol 2,4-cyclodiphosphate (ME-CPP) with a corresponding release of cytidine 5-monophosphate (CMP) (IspF). The chain is Bifunctional enzyme IspD/IspF from Anaeromyxobacter dehalogenans (strain 2CP-C).